A 346-amino-acid polypeptide reads, in one-letter code: MLNVAIVGASGYTGLELLRILYAHPQVAVTCVTSERSAGKRIDEVFPTLRDRCSLVLENLEPVRVSQKADLIFTALPHKAAMAVMPTFMELGKTVIDLSADYRLSDAEVYGAWYEPHLNPELLKSAVYGLPEIRRESIRGKKLVANPGCYPTSITLGLAPLLKNGMIDLKSIIADSASGVTGAGRGAKVDSLYCEVNEGYKAYGVGGVHRHTPEIEQELSLLAGEKVTLTFTPHLVPMDRGILSTIYATPLKGVTTEELNELYRNFYAEEPFVRVLPLGSLPSTAFVRGSNFCDIAPVVDKRTGRVIVVSAIDNLMKGASGQAVQNMNIVCGFYESAGLSGLALFP.

The active site involves cysteine 149.

It belongs to the NAGSA dehydrogenase family. Type 1 subfamily.

The protein resides in the cytoplasm. The catalysed reaction is N-acetyl-L-glutamate 5-semialdehyde + phosphate + NADP(+) = N-acetyl-L-glutamyl 5-phosphate + NADPH + H(+). It participates in amino-acid biosynthesis; L-arginine biosynthesis; N(2)-acetyl-L-ornithine from L-glutamate: step 3/4. Its function is as follows. Catalyzes the NADPH-dependent reduction of N-acetyl-5-glutamyl phosphate to yield N-acetyl-L-glutamate 5-semialdehyde. This is N-acetyl-gamma-glutamyl-phosphate reductase from Pelobacter propionicus (strain DSM 2379 / NBRC 103807 / OttBd1).